A 470-amino-acid chain; its full sequence is Growth/differentiation factor 6 (470 aa).

The N-terminal stretch at 1-22 (MDTSRVLLSAVFLISFLWDLPG) is a signal peptide. Positions 23–350 (FQQASISSSS…SPSPGRRRRR (328 aa)) are excised as a propeptide. The disordered stretch occupies residues 28-98 (ISSSSSSAEL…REPPGRGPRV (71 aa)). Over residues 45 to 80 (SRKEGRMPRAPRENATAREPLDRQEPPPRPQEEPQR) the composition is skewed to basic and acidic residues. A glycan (N-linked (GlcNAc...) asparagine) is linked at Asn-120. 2 disordered regions span residues 247 to 272 (PGAAEDEARAPGPQQPPPPDLRSLGF) and 308 to 366 (TEVV…KKSR). The segment covering 321–333 (GPPPPPPPPPPSG) has biased composition (pro residues). Over residues 345 to 366 (GRRRRRTAFASRHGKRHGKKSR) the composition is skewed to basic residues. Disulfide bonds link Cys-369–Cys-435, Cys-398–Cys-467, and Cys-402–Cys-469.

This sequence belongs to the TGF-beta family. In terms of assembly, homodimer; disulfide-linked.

Its subcellular location is the secreted. Growth factor that controls proliferation and cellular differentiation in the retina and bone formation. Plays a key role in regulating apoptosis during retinal development. Establishes dorsal-ventral positional information in the retina and controls the formation of the retinotectal map. Required for normal formation of bones and joints in the limbs, skull, digits and axial skeleton. Plays a key role in establishing boundaries between skeletal elements during development. Regulation of GDF6 expression seems to be a mechanism for evolving species-specific changes in skeletal structures. Seems to positively regulate differentiation of chondrogenic tissue through the growth factor receptors subunits BMPR1A, BMPR1B, BMPR2 and ACVR2A, leading to the activation of SMAD1-SMAD5-SMAD8 complex. The regulation of chondrogenic differentiation is inhibited by NOG. Also involved in the induction of adipogenesis from mesenchymal stem cells. This mechanism acts through the growth factor receptors subunits BMPR1A, BMPR2 and ACVR2A and the activation of SMAD1-SMAD5-SMAD8 complex and MAPK14/p38. In Bos taurus (Bovine), this protein is Growth/differentiation factor 6 (GDF6).